Reading from the N-terminus, the 471-residue chain is GDP-fucose protein O-fucosyltransferase 3 (471 aa).

Residues 1-8 (MNRMWEKK) are Cytoplasmic-facing. A helical; Signal-anchor for type II membrane protein transmembrane segment spans residues 9–29 (FWISCFFIILFFILVTLQVMV). Residues 30–471 (ELGRFEKRET…EFWNLVFKFQ (442 aa)) lie on the Lumenal side of the membrane. 4 N-linked (GlcNAc...) asparagine glycosylation sites follow: N102, N122, N160, and N310. C381 and C384 are joined by a disulfide. A glycan (N-linked (GlcNAc...) asparagine) is linked at N457.

The protein belongs to the glycosyltransferase 10 family.

It is found in the endoplasmic reticulum membrane. It carries out the reaction L-threonyl-[protein] + GDP-beta-L-fucose = 3-O-(alpha-L-fucosyl)-L-threonyl-[protein] + GDP + H(+). The catalysed reaction is L-seryl-[protein] + GDP-beta-L-fucose = 3-O-(alpha-L-fucosyl)-L-seryl-[protein] + GDP + H(+). Its pathway is protein modification; protein glycosylation. Its function is as follows. Protein O-fucosyltransferase that specifically catalyzes O-fucosylation of serine or threonine residues in EMI domains of target proteins. Attaches fucose through an O-glycosidic linkage. O-fucosylation of EMI domain-containing proteins may be required for facilitating protein folding and secretion. In Xenopus tropicalis (Western clawed frog), this protein is GDP-fucose protein O-fucosyltransferase 3 (fut10).